Here is a 499-residue protein sequence, read N- to C-terminus: Aldehyde dehydrogenase 1 (499 aa).

NAD(+) is bound by residues 164-166 (IPW), 164-167 (IPWN), 190-193 (KPAE), 223-224 (GS), 243-244 (GS), 243-248 (GSTKVG), and 266-268 (ELG). Residue Glu-266 is the Proton acceptor of the active site. The Nucleophile role is filled by Cys-300. NAD(+) is bound by residues 346 to 350 (QQYEK) and 397 to 399 (EIF).

It belongs to the aldehyde dehydrogenase family. As to quaternary structure, homotetramer. As to expression, expressed in flowers and disk florets.

It catalyses the reaction an aldehyde + NAD(+) + H2O = a carboxylate + NADH + 2 H(+). The enzyme catalyses an aldehyde + NADP(+) + H2O = a carboxylate + NADPH + 2 H(+). The catalysed reaction is octanal + NADP(+) + H2O = octanoate + NADPH + 2 H(+). It carries out the reaction (1R,3R)-chrysanthemal + NAD(+) + H2O = (1R,3R)-chrysanthemate + NADH + 2 H(+). It catalyses the reaction (1R,3R)-chrysanthemal + NADP(+) + H2O = (1R,3R)-chrysanthemate + NADPH + 2 H(+). The enzyme catalyses (E)-hept-2-enal + NADP(+) + H2O = (E)-hept-2-enoate + NADPH + 2 H(+). The catalysed reaction is dodecanal + NADP(+) + H2O = dodecanoate + NADPH + 2 H(+). It carries out the reaction citral + NADP(+) + H2O = 3,7-dimethylocta-2,6-dienoate + NADPH + 2 H(+). It catalyses the reaction perillyl aldehyde + NADP(+) + H2O = perillate + NADPH + 2 H(+). The enzyme catalyses (2E,6E)-farnesal + NADP(+) + H2O = (2E,6E)-farnesoate + NADPH + 2 H(+). The catalysed reaction is (S)-(-)-citronellal + NADP(+) + H2O = (S)-(-)-citronellate + NADPH + 2 H(+). It functions in the pathway isoprenoid biosynthesis. Functionally, component of the monoterpenoid pyrethrins biosynthesis; pyrethrins are widely used plant-derived pesticide. Mediates the conversion of trans-chrysanthemal into trans-chrysanthemic acid. Can also use octanal, hept-2-enal, dodecanal, citral, farnesal, citronellal and perillyl aldehyde as substrates. The chain is Aldehyde dehydrogenase 1 from Tanacetum cinerariifolium (Dalmatian daisy).